The sequence spans 130 residues: Large ribosomal subunit protein bL20 (130 aa).

The protein belongs to the bacterial ribosomal protein bL20 family.

Functionally, binds directly to 23S ribosomal RNA and is necessary for the in vitro assembly process of the 50S ribosomal subunit. It is not involved in the protein synthesizing functions of that subunit. The polypeptide is Large ribosomal subunit protein bL20 (Salinispora arenicola (strain CNS-205)).